The following is a 224-amino-acid chain: Enolase-phosphatase E1 (224 aa).

The protein belongs to the HAD-like hydrolase superfamily. MasA/MtnC family. As to quaternary structure, monomer. Requires Mg(2+) as cofactor.

It carries out the reaction 5-methylsulfanyl-2,3-dioxopentyl phosphate + H2O = 1,2-dihydroxy-5-(methylsulfanyl)pent-1-en-3-one + phosphate. The protein operates within amino-acid biosynthesis; L-methionine biosynthesis via salvage pathway; L-methionine from S-methyl-5-thio-alpha-D-ribose 1-phosphate: step 3/6. Its pathway is amino-acid biosynthesis; L-methionine biosynthesis via salvage pathway; L-methionine from S-methyl-5-thio-alpha-D-ribose 1-phosphate: step 4/6. Functionally, bifunctional enzyme that catalyzes the enolization of 2,3-diketo-5-methylthiopentyl-1-phosphate (DK-MTP-1-P) into the intermediate 2-hydroxy-3-keto-5-methylthiopentenyl-1-phosphate (HK-MTPenyl-1-P), which is then dephosphorylated to form the acireductone 1,2-dihydroxy-3-keto-5-methylthiopentene (DHK-MTPene). This is Enolase-phosphatase E1 from Thioalkalivibrio sulfidiphilus (strain HL-EbGR7).